The following is a 451-amino-acid chain: Cobalamin reductase PduS (451 aa).

2 4Fe-4S ferredoxin-type domains span residues 255 to 284 (TVLS…HELS) and 300 to 330 (PQLL…MRIN). Residues cysteine 264, cysteine 267, cysteine 270, cysteine 274, cysteine 309, cysteine 312, cysteine 315, and cysteine 320 each coordinate [4Fe-4S] cluster.

The protein belongs to the PduS cobalamin reductase family. In terms of assembly, monomer, forms a complex with PduO. Interacts with PduT, probably via the N-terminus of PduS. It depends on [4Fe-4S] cluster as a cofactor. FMN is required as a cofactor.

Its subcellular location is the bacterial microcompartment. The protein operates within polyol metabolism; 1,2-propanediol degradation. In terms of biological role, a bifunctional cobalamin reductase that converts cob(III)alamin to cob(II)alamin and then to cob(I)alamin in the bacterial microcompartment (BMC) dedicated to 1,2-propanediol (1,2-PD) degradation. PduS and PduO allow regeneration of the adenosylcobalamin cofactor within the BMC. Cobalamin reduction probably occurs spontaneously in the presence of free reduced flavin nucleotides, this protein may be involved in electron transfer for this reduction. Functionally, expression of a cosmid containing the full 21-gene pdu operon in E.coli allows E.coli to grow on 1,2-propanediol (1,2-PD) with the appearance of BMCs in its cytoplasm. Its function is as follows. The 1,2-PD-specific bacterial microcompartment (BMC) concentrates low levels of 1,2-PD catabolic enzymes, concentrates volatile reaction intermediates thus enhancing pathway flux and keeps the level of toxic, mutagenic propionaldehyde low. The chain is Cobalamin reductase PduS from Citrobacter freundii.